A 691-amino-acid chain; its full sequence is Lacticin-481/lactococcin-DR transport/processing ATP-binding protein lcnDR3 (691 aa).

Residues 6 to 130 (QNNEQDCLLA…KKFSGYIITL (125 aa)) form the Peptidase C39 domain. The active site involves Cys12. One can recognise an ABC transmembrane type-1 domain in the interval 158 to 434 (TFLYIFSLFI…IQDVMFEISR (277 aa)). 5 helical membrane-spanning segments follow: residues 159-179 (FLYI…SIIL), 189-209 (ITYS…SLLM), 262-284 (GILL…IIYL), 289-311 (FTLT…SLIS), and 385-405 (ICVI…LVSI). An ABC transporter domain is found at 464–689 (IILKDISYSY…LLNDSYNSFV (226 aa)). 497 to 504 (GKSGSGKS) is an ATP binding site.

This sequence belongs to the ABC transporter superfamily.

It is found in the cell membrane. In terms of biological role, probably implicated in the export process of the lantibiotic lacticin-481/lactococcin-DR. The sequence is that of Lacticin-481/lactococcin-DR transport/processing ATP-binding protein lcnDR3 (lcnDR3) from Lactococcus lactis subsp. lactis (Streptococcus lactis).